Reading from the N-terminus, the 630-residue chain is Polygalacturonase-1 non-catalytic subunit beta (630 aa).

A signal peptide spans 1–27 (MHTKIHLPPCILLLLLFSLPSFNVVVG). The propeptide occupies 28–108 (GDGESGNPFT…MCAPDLSPSL (81 aa)). Asparagine 124, asparagine 142, asparagine 256, asparagine 334, asparagine 369, and asparagine 387 each carry an N-linked (GlcNAc...) asparagine glycan. The propeptide occupies 398–630 (EVNGGKKVNN…ENDMTWAIAD (233 aa)). The 215-residue stretch at 415–629 (FFREKMLKSG…FENDMTWAIA (215 aa)) folds into the BURP domain.

Interacts with polygalacturonase-2 (isoenzymes PG2A and PG2B) to form heterodimers called polygalacturonase-1 (PG1). Mostly expressed in fruit pericarp. Also detected at low levels in cell wall of roots, leaves and flowers (at protein level).

The protein localises to the secreted. The protein resides in the extracellular space. It localises to the apoplast. Its subcellular location is the cell wall. Non-catalytic subunit of the polygalacturonase isozyme 1 (PG1). Necessary and sufficient to convert the polygalacturonase from its monomeric form PG2 to its heterodimeric form PG1. Seems to limit the depolymerization and solubilization of cell wall polyuronides mediated by PG2 during ripening, probably by recruiting PG2 to form PG1. The polypeptide is Polygalacturonase-1 non-catalytic subunit beta (GP1) (Solanum lycopersicum (Tomato)).